The primary structure comprises 183 residues: Photosystem II extrinsic protein V (183 aa).

An N-terminal signal peptide occupies residues 1–31 (MTFGHCRRASTLRSAFVLGLCGLLLAGCSGA). Heme c-binding residues include Cys84, Cys87, His88, and Cys138.

The protein belongs to the cytochrome c family. PsbV subfamily. PSII is composed of 1 copy each of membrane proteins PsbA, PsbB, PsbC, PsbD, PsbE, PsbF, PsbH, PsbI, PsbJ, PsbK, PsbL, PsbM, PsbT, PsbX, Psb30/Ycf12, peripheral proteins PsbO, CyanoQ (PsbQ), PsbU, PsbV and a large number of cofactors. It forms dimeric complexes. Heme c is required as a cofactor.

Its subcellular location is the cell inner membrane. Functionally, probably one of the extrinsic, lumenal subunits of photosystem II (PSII). PSII is a light-driven water plastoquinone oxidoreductase, using light energy to abstract electrons from H(2)O, generating a proton gradient subsequently used for ATP formation. The extrinsic proteins stabilize the structure of photosystem II oxygen-evolving complex (OEC), the ion environment of oxygen evolution and protect the OEC against heat-induced inactivation. Low-potential cytochrome c that plays a role in the OEC of PSII. In Gloeobacter violaceus (strain ATCC 29082 / PCC 7421), this protein is Photosystem II extrinsic protein V (psbV1).